Consider the following 123-residue polypeptide: RNA silencing suppressor (123 aa).

The segment at 52–55 is basic; the sequence is KRRR. The C4-type zinc-finger motif lies at 62 to 83; the sequence is CVRCFRVNPGFYFTKRCDGITC.

It belongs to the carlaviruses nucleic acid-binding protein family.

In terms of biological role, suppressor of viral-induced RNA silencing. The potential mechanism of action is based on sequestering siRNAs. In Populus balsamifera (Balsam poplar), this protein is RNA silencing suppressor.